We begin with the raw amino-acid sequence, 152 residues long: D-aminoacyl-tRNA deacylase (152 aa).

The short motif at glycine 142–proline 143 is the Gly-cisPro motif, important for rejection of L-amino acids element.

This sequence belongs to the DTD family. In terms of assembly, homodimer.

The protein localises to the cytoplasm. It catalyses the reaction glycyl-tRNA(Ala) + H2O = tRNA(Ala) + glycine + H(+). The catalysed reaction is a D-aminoacyl-tRNA + H2O = a tRNA + a D-alpha-amino acid + H(+). An aminoacyl-tRNA editing enzyme that deacylates mischarged D-aminoacyl-tRNAs. Also deacylates mischarged glycyl-tRNA(Ala), protecting cells against glycine mischarging by AlaRS. Acts via tRNA-based rather than protein-based catalysis; rejects L-amino acids rather than detecting D-amino acids in the active site. By recycling D-aminoacyl-tRNA to D-amino acids and free tRNA molecules, this enzyme counteracts the toxicity associated with the formation of D-aminoacyl-tRNA entities in vivo and helps enforce protein L-homochirality. This Paraburkholderia xenovorans (strain LB400) protein is D-aminoacyl-tRNA deacylase.